Consider the following 396-residue polypeptide: Proton-coupled antiporter flippase LtaA (396 aa).

The next 12 helical transmembrane spans lie at 15–34, 46–73, 80–99, 105–126, 138–159, 165–184, 211–231, 243–264, 276–298, 304–326, 338–358, and 370–390; these read FILM…MYIL, IAVA…GFLL, IVLT…VIWF, VIIF…IMLS, GYVY…NLLI, RFAF…YYFV, LLLF…VPIL, TIEY…MLFL, MYGV…SMIV, WIIA…TFMA, WGVF…FGGL, and FYFS…YFIA.

This sequence belongs to the major facilitator superfamily. LtaA family.

It is found in the cell membrane. It participates in cell wall biogenesis; lipoteichoic acid biosynthesis. In terms of biological role, proton-coupled antiporter flippase that catalyzes the translocation, from the inner to the outer leaflet of the cell membrane, of the lipid-linked disaccharide (anchor-LLD) that anchors lipoteichoic acids (LTA) to the cell membrane. This Staphylococcus aureus (strain MRSA252) protein is Proton-coupled antiporter flippase LtaA (ltaA).